The sequence spans 550 residues: Medium-chain acyl-CoA ligase Mig (550 aa).

The first 19 residues, 1 to 19 (MSDTTTAFTVPAVAKAVAA), serve as a signal peptide directing secretion.

Belongs to the ATP-dependent AMP-binding enzyme family.

The protein resides in the secreted. It is found in the cell wall. It catalyses the reaction a medium-chain fatty acid + ATP + CoA = a medium-chain fatty acyl-CoA + AMP + diphosphate. The catalysed reaction is hexanoate + ATP + CoA = hexanoyl-CoA + AMP + diphosphate. The enzyme catalyses heptanoate + ATP + CoA = heptanoyl-CoA + AMP + diphosphate. It carries out the reaction octanoate + ATP + CoA = octanoyl-CoA + AMP + diphosphate. It catalyses the reaction decanoate + ATP + CoA = decanoyl-CoA + AMP + diphosphate. The catalysed reaction is dodecanoate + ATP + CoA = dodecanoyl-CoA + AMP + diphosphate. The enzyme catalyses tetradecanoate + ATP + CoA = tetradecanoyl-CoA + AMP + diphosphate. It carries out the reaction (9Z)-octadecenoate + ATP + CoA = (9Z)-octadecenoyl-CoA + AMP + diphosphate. It catalyses the reaction (9Z,12Z,15Z)-octadecatrienoate + ATP + CoA = (9Z,12Z,15Z)-octadecatrienoyl-CoA + AMP + diphosphate. The catalysed reaction is (5Z,8Z,11Z,14Z)-eicosatetraenoate + ATP + CoA = (5Z,8Z,11Z,14Z)-eicosatetraenoyl-CoA + AMP + diphosphate. It functions in the pathway lipid metabolism; fatty acid metabolism. With respect to regulation, inhibited by 2-hydroxydodecanoic acid, a typical inhibitor of medium-chain acyl-CoA synthetases. Functionally, catalyzes the activation of medium-chain fatty acids as acyl-coenzyme A (acyl-CoA). Shows maximal activity with saturated fatty acids of medium-chain length between C6 and C12. Has lower activity with tridecanoic acid (C13), tetradecanoic acid (C14) and with unsaturated fatty acids like oleic acid (C18:1), linolenic acid (C18:3) and arachidonic acid (C20:4). Shows weak activity with some aromatic carbon acids. Involved in the metabolism of fatty acid during mycobacterial survival in macrophages. This is Medium-chain acyl-CoA ligase Mig from Mycobacterium avium.